Consider the following 968-residue polypeptide: Isoleucine--tRNA ligase (968 aa).

The 'HIGH' region motif lies at 68–78 (PYANGALHMGH). E582 contributes to the L-isoleucyl-5'-AMP binding site. The 'KMSKS' region signature appears at 623-627 (KMSKS). An ATP-binding site is contributed by K626. Zn(2+)-binding residues include C936, C939, C956, and C959.

This sequence belongs to the class-I aminoacyl-tRNA synthetase family. IleS type 1 subfamily. In terms of assembly, monomer. Zn(2+) is required as a cofactor.

The protein resides in the cytoplasm. The catalysed reaction is tRNA(Ile) + L-isoleucine + ATP = L-isoleucyl-tRNA(Ile) + AMP + diphosphate. Catalyzes the attachment of isoleucine to tRNA(Ile). As IleRS can inadvertently accommodate and process structurally similar amino acids such as valine, to avoid such errors it has two additional distinct tRNA(Ile)-dependent editing activities. One activity is designated as 'pretransfer' editing and involves the hydrolysis of activated Val-AMP. The other activity is designated 'posttransfer' editing and involves deacylation of mischarged Val-tRNA(Ile). The protein is Isoleucine--tRNA ligase of Prochlorococcus marinus (strain MIT 9301).